The chain runs to 342 residues: S-adenosylmethionine:tRNA ribosyltransferase-isomerase (342 aa).

It belongs to the QueA family. As to quaternary structure, monomer.

Its subcellular location is the cytoplasm. The catalysed reaction is 7-aminomethyl-7-carbaguanosine(34) in tRNA + S-adenosyl-L-methionine = epoxyqueuosine(34) in tRNA + adenine + L-methionine + 2 H(+). It participates in tRNA modification; tRNA-queuosine biosynthesis. Its function is as follows. Transfers and isomerizes the ribose moiety from AdoMet to the 7-aminomethyl group of 7-deazaguanine (preQ1-tRNA) to give epoxyqueuosine (oQ-tRNA). In Moorella thermoacetica (strain ATCC 39073 / JCM 9320), this protein is S-adenosylmethionine:tRNA ribosyltransferase-isomerase.